Here is a 144-residue protein sequence, read N- to C-terminus: Large ribosomal subunit protein uL15 (144 aa).

Positions 1 to 52 are disordered; it reads MRLNTLSPAEGAKHAPKRVGRGIGSGLGKTGGRGHKGQKSRSGGGVRRGFEG. Positions 21 to 31 are enriched in gly residues; the sequence is RGIGSGLGKTG.

This sequence belongs to the universal ribosomal protein uL15 family. In terms of assembly, part of the 50S ribosomal subunit.

In terms of biological role, binds to the 23S rRNA. This chain is Large ribosomal subunit protein uL15, found in Buchnera aphidicola subsp. Acyrthosiphon kondoi (Acyrthosiphon kondoi symbiotic bacterium).